We begin with the raw amino-acid sequence, 39 residues long: Omega-theraphotoxin-Ba1a (39 aa).

Disulfide bonds link cysteine 4–cysteine 25, cysteine 8–cysteine 31, and cysteine 17–cysteine 36.

The protein belongs to the neurotoxin 12 (Hwtx-2) family. 06 (TXP1) subfamily. Expressed by the venom gland.

Its subcellular location is the secreted. Its function is as follows. Inhibits voltage-gated calcium channels (Cav) in rat cerebellar granule cells. Has insecticidal activity to crickets (Acheta domesticus). Is not toxic to mice. This Brachypelma albiceps (Mexican golden redrump tarantula) protein is Omega-theraphotoxin-Ba1a.